The sequence spans 506 residues: Maturase K (506 aa).

Belongs to the intron maturase 2 family. MatK subfamily.

It is found in the plastid. It localises to the chloroplast. In terms of biological role, usually encoded in the trnK tRNA gene intron. Probably assists in splicing its own and other chloroplast group II introns. The chain is Maturase K from Mentzelia lindleyi (Blazing star).